Here is a 474-residue protein sequence, read N- to C-terminus: Cbb3-type cytochrome c oxidase subunit CcoN1 (474 aa).

Topologically, residues 1–16 (MNTATSTAYSYKVVRQ) are cytoplasmic. A helical membrane pass occupies residues 17–37 (FAIMTVVWGIVGMGLGVFIAA). The Periplasmic segment spans residues 38–60 (QLAWPFLNFDLPWTSFGRLRPLH). Position 60 (His-60) interacts with heme b. Residues 61–81 (TNAVIFAFGGCALFATSYYSV) traverse the membrane as a helical segment. Over 82 to 96 (QRTCQTTLFAPKLAA) the chain is Cytoplasmic. A helical transmembrane segment spans residues 97–117 (FTFWGWQLVILLAAISLPLGF). Topologically, residues 118 to 129 (TSSKEYAELEWP) are periplasmic. The helical transmembrane segment at 130-150 (IDILITIVWVAYAVVFFGTLA) threads the bilayer. At 151–156 (KRKVKH) the chain is on the cytoplasmic side. Residues 157–177 (IYVGNWFFGAFILTVAILHVV) form a helical membrane-spanning segment. Residues 178 to 205 (NNLEIPVTAMKSYSLYAGATDAMVQWWY) are Periplasmic-facing. Residues 206 to 226 (GHNAVGFFLTAGFLGIMYYFV) traverse the membrane as a helical segment. Cu cation is bound at residue His-207. At 227-238 (PKQAERPVYSYR) the chain is on the cytoplasmic side. Residues 239–259 (LSIVHFWALITVYIWAGPHHL) form a helical membrane-spanning segment. Cu cation-binding residues include His-257 and His-258. Over 260–270 (HYTALPDWAQS) the chain is Periplasmic. A helical transmembrane segment spans residues 271 to 291 (LGMVMSLILLAPSWGGMINGM). Over 292–308 (MTLSGAWHKLRSDPILR) the chain is Cytoplasmic. Residues 309–329 (FLVVSLAFYGMSTFEGPMMAI) form a helical membrane-spanning segment. Residues 330-345 (KTVNALSHYTDWTIGH) are Periplasmic-facing. Residues His-345 and His-347 each coordinate heme b. A helical transmembrane segment spans residues 346–366 (VHAGALGWVAMVSIGALYHLV). The Cytoplasmic portion of the chain corresponds to 367 to 384 (PKVFGREQMHSIGLINTH). A helical membrane pass occupies residues 385 to 405 (FWLATIGTVLYIASMWVNGIA). Residues 406–432 (QGLMWRAINDDGTLTYSFVESLEASHP) lie on the Periplasmic side of the membrane. Residues 433–453 (GFVVRMIGGAIFFAGMLVMAY) form a helical membrane-spanning segment. Over 454–474 (NTWRTVQAAKPAEYDAAAQIA) the chain is Cytoplasmic.

Belongs to the heme-copper respiratory oxidase family. As to quaternary structure, component of the cbb3-type cytochrome c oxidase at least composed of CcoN, CcoO, CcoQ and CcoP. Requires Cu(2+) as cofactor. The cofactor is heme b.

Its subcellular location is the cell inner membrane. The catalysed reaction is 4 Fe(II)-[cytochrome c] + O2 + 8 H(+)(in) = 4 Fe(III)-[cytochrome c] + 2 H2O + 4 H(+)(out). Its pathway is energy metabolism; oxidative phosphorylation. Cbb3-type cytochrome c oxidase is the component of the respiratory chain that catalyzes the reduction of oxygen to water. Subunits CcoN and CcoO form the functional core of the enzyme complex. Subunits CcoP and CcoQ may optionally bind to the core. CcoN is the catalytic subunit of the enzyme. Electrons originating in cytochrome c or a quinol are transferred to the bimetallic center formed by a high-spin heme and copper B. The complex also functions as a proton pump. This chain is Cbb3-type cytochrome c oxidase subunit CcoN1, found in Stutzerimonas stutzeri (Pseudomonas stutzeri).